The following is a 328-amino-acid chain: Acyl-CoA wax alcohol acyltransferase 1 (328 aa).

Helical transmembrane passes span 12–32 and 34–53; these read SLML…LQPL and VYLL…AWLF.

The protein belongs to the diacylglycerol acyltransferase family. In terms of tissue distribution, predominantly expressed in skin, where it is limited to the sebaceous gland. Expressed in more mature, centrally located cells just before their rupture and sebum release. Also expressed in all tissues except spleen. Expressed at higher level in thymus, prostate and testis.

It localises to the endoplasmic reticulum membrane. It carries out the reaction a long chain fatty alcohol + a fatty acyl-CoA = a wax ester + CoA. The enzyme catalyses 1,2-di-(9Z-octadecenoyl)-sn-glycerol + (9Z)-octadecenoyl-CoA = 1,2,3-tri-(9Z-octadecenoyl)-glycerol + CoA. The catalysed reaction is hexadecan-1-ol + (9Z)-octadecenoyl-CoA = hexadecanyl (9Z)-octadecenoate + CoA. It catalyses the reaction decan-1-ol + (9Z)-octadecenoyl-CoA = 1-O-decyl-(9Z)-octadecenoate + CoA. It carries out the reaction (9Z)-hexadecen-1-ol + (9Z)-octadecenoyl-CoA = 1-O-(9Z)-hexadecenyl (9Z)-octadecenoate + CoA. The enzyme catalyses octadecan-1-ol + (9Z)-octadecenoyl-CoA = 1-O-octadecyl (9Z)-octadecenoate + CoA. The catalysed reaction is (9Z)-octadecen-1-ol + (9Z)-octadecenoyl-CoA = 1-O-(9Z)-octadecenyl (9Z)-octadecenoate + CoA. It catalyses the reaction hexadecan-1-ol + hexadecanoyl-CoA = hexadecanyl hexadecanoate + CoA. It carries out the reaction hexadecan-1-ol + (9Z)-hexadecenoyl-CoA = 1-O-hexadecyl (9Z)-hexadecenoate + CoA. The enzyme catalyses hexadecan-1-ol + octadecanoyl-CoA = hexadecanyl octadecanoate + CoA. The catalysed reaction is eicosan-1-ol + (9Z)-octadecenoyl-CoA = 1-O-eicosanyl (9Z)-octadecenoate + CoA. In terms of biological role, acyltransferase that catalyzes the formation of ester bonds between fatty alcohols and fatty acyl-CoAs to form wax monoesters. Shows a strong preference for decyl alcohol (C10), with less activity towards C16 and C18 alcohols. Shows a strong preference for saturated acyl-CoAs. This Homo sapiens (Human) protein is Acyl-CoA wax alcohol acyltransferase 1 (AWAT1).